The sequence spans 205 residues: Ribonuclease HII (205 aa).

Residues 15–205 (SRVCGIDEAG…SFKLRKLGEK (191 aa)) form the RNase H type-2 domain. Residues aspartate 21, glutamate 22, and aspartate 117 each contribute to the a divalent metal cation site.

Belongs to the RNase HII family. It depends on Mn(2+) as a cofactor. The cofactor is Mg(2+).

It is found in the cytoplasm. It carries out the reaction Endonucleolytic cleavage to 5'-phosphomonoester.. Endonuclease that specifically degrades the RNA of RNA-DNA hybrids. This is Ribonuclease HII from Chlorobaculum parvum (strain DSM 263 / NCIMB 8327) (Chlorobium vibrioforme subsp. thiosulfatophilum).